We begin with the raw amino-acid sequence, 105 residues long: MERIQIISNHILPIVQHNNNNKQYYEQQYLLLANNTTDAIMELSEEHEKEESLRKIQCENNGIEYVYKPLFIDFGVHMNNNNNNKTITVDNNNNNNNNNNNNNNK.

The interval 81–105 (NNNNKTITVDNNNNNNNNNNNNNNK) is disordered.

This is an uncharacterized protein from Dictyostelium discoideum (Social amoeba).